The following is a 109-amino-acid chain: Small ribosomal subunit protein uS17A (109 aa).

It belongs to the universal ribosomal protein uS17 family. Part of the 30S ribosomal subunit.

In terms of biological role, one of the primary rRNA binding proteins, it binds specifically to the 5'-end of 16S ribosomal RNA. The polypeptide is Small ribosomal subunit protein uS17A (Methanosarcina acetivorans (strain ATCC 35395 / DSM 2834 / JCM 12185 / C2A)).